We begin with the raw amino-acid sequence, 539 residues long: GMP synthase [glutamine-hydrolyzing] (539 aa).

In terms of domain architecture, Glutamine amidotransferase type-1 spans 4 to 203 (KILILDFGSQ…VHDICGCKSD (200 aa)). The active-site Nucleophile is C82. Active-site residues include H177 and E179. One can recognise a GMPS ATP-PPase domain in the interval 204-395 (WNMPDYIAEA…LGLPHDMVYR (192 aa)). 231-237 (SGGVDSS) is a binding site for ATP.

Homodimer.

It catalyses the reaction XMP + L-glutamine + ATP + H2O = GMP + L-glutamate + AMP + diphosphate + 2 H(+). The protein operates within purine metabolism; GMP biosynthesis; GMP from XMP (L-Gln route): step 1/1. Catalyzes the synthesis of GMP from XMP. This chain is GMP synthase [glutamine-hydrolyzing], found in Janthinobacterium sp. (strain Marseille) (Minibacterium massiliensis).